Consider the following 1755-residue polypeptide: Transposon Ty1-ER2 Gag-Pol polyprotein (1755 aa).

3 stretches are compositionally biased toward polar residues: residues 1 to 10 (MESQQLSNYP), 48 to 60 (TKAN…TPAS), and 127 to 152 (QSQF…GNTF). Disordered stretches follow at residues 1 to 93 (MESQ…MMTQ), 126 to 173 (PQSQ…RPPP), and 352 to 421 (GSRN…SKST). Positions 153-165 (TDSSSADSDMTST) are enriched in low complexity. The tract at residues 299-401 (NNGIHINNKV…NSKSKTARAH (103 aa)) is RNA-binding. Low complexity predominate over residues 402-418 (NVSTSNNSPSTDNDSIS). Catalysis depends on Asp461, which acts as the For protease activity; shared with dimeric partner. Residues 583-640 (NVHTSESTRKYPYPFIHRMLAHANAQTIRYSLKNNTITYFNESDVDWSSAIDYQCPDC) are integrase-type zinc finger-like. Residues 660–835 (NSYEPFQYLH…AGLDISTLLP (176 aa)) enclose the Integrase catalytic domain. The Mg(2+) site is built by Asp671 and Asp736. Residues 958 to 1170 (AVSPTDSTPP…SSLGGIGDSN (213 aa)) form a disordered region. The segment covering 960-969 (SPTDSTPPST) has biased composition (low complexity). Polar residues predominate over residues 1005-1015 (STPQISDIEST). Residues 1038-1053 (ESSHASKSKDFRHSDS) are compositionally biased toward basic and acidic residues. Polar residues-rich tracts occupy residues 1054–1082 (YSDN…QTSE) and 1095–1106 (SIDTSSSESNSL). Positions 1178 to 1212 (KKRSLEDNETEIKVSRDTWNTKNMRSLEPPRSKKR) match the Bipartite nuclear localization signal motif. One can recognise a Reverse transcriptase Ty1/copia-type domain in the interval 1338–1476 (NNYYITQLDI…DILGLEIKYQ (139 aa)). 6 residues coordinate Mg(2+): Asp1346, Asp1427, Asp1428, Asp1610, Glu1652, and Asp1685. In terms of domain architecture, RNase H Ty1/copia-type spans 1610-1752 (DASYGNQPYY…IKTFKLLTNK (143 aa)).

In terms of assembly, the capsid protein forms a homotrimer, from which the VLPs are assembled. The protease is a homodimer, whose active site consists of two apposed aspartic acid residues. Post-translationally, initially, virus-like particles (VLPs) are composed of the structural unprocessed proteins Gag and Gag-Pol, and also contain the host initiator methionine tRNA (tRNA(i)-Met) which serves as a primer for minus-strand DNA synthesis, and a dimer of genomic Ty RNA. Processing of the polyproteins occurs within the particle and proceeds by an ordered pathway, called maturation. First, the protease (PR) is released by autocatalytic cleavage of the Gag-Pol polyprotein yielding capsid protein p45 and a Pol-p154 precursor protein. This cleavage is a prerequisite for subsequent processing of Pol-p154 at the remaining sites to release the mature structural and catalytic proteins. Maturation takes place prior to the RT reaction and is required to produce transposition-competent VLPs.

The protein resides in the cytoplasm. The protein localises to the nucleus. It catalyses the reaction DNA(n) + a 2'-deoxyribonucleoside 5'-triphosphate = DNA(n+1) + diphosphate. The enzyme catalyses Endonucleolytic cleavage to 5'-phosphomonoester.. In terms of biological role, capsid protein (CA) is the structural component of the virus-like particle (VLP), forming the shell that encapsulates the retrotransposons dimeric RNA genome. The particles are assembled from trimer-clustered units and there are holes in the capsid shells that allow for the diffusion of macromolecules. CA also has nucleocapsid-like chaperone activity, promoting primer tRNA(i)-Met annealing to the multipartite primer-binding site (PBS), dimerization of Ty1 RNA and initiation of reverse transcription. The aspartyl protease (PR) mediates the proteolytic cleavages of the Gag and Gag-Pol polyproteins after assembly of the VLP. Functionally, reverse transcriptase/ribonuclease H (RT) is a multifunctional enzyme that catalyzes the conversion of the retro-elements RNA genome into dsDNA within the VLP. The enzyme displays a DNA polymerase activity that can copy either DNA or RNA templates, and a ribonuclease H (RNase H) activity that cleaves the RNA strand of RNA-DNA heteroduplexes during plus-strand synthesis and hydrolyzes RNA primers. The conversion leads to a linear dsDNA copy of the retrotransposon that includes long terminal repeats (LTRs) at both ends. Its function is as follows. Integrase (IN) targets the VLP to the nucleus, where a subparticle preintegration complex (PIC) containing at least integrase and the newly synthesized dsDNA copy of the retrotransposon must transit the nuclear membrane. Once in the nucleus, integrase performs the integration of the dsDNA into the host genome. In Saccharomyces cerevisiae (strain ATCC 204508 / S288c) (Baker's yeast), this protein is Transposon Ty1-ER2 Gag-Pol polyprotein (TY1B-ER2).